Here is a 1881-residue protein sequence, read N- to C-terminus: Kinesin-like protein KIF26A (1881 aa).

3 disordered regions span residues 20-66, 145-193, and 309-330; these read PARE…AGGG, PASH…PPGP, and ASKR…STYP. Ser-30 is modified (phosphoserine). The Kinesin motor domain maps to 364 to 718; it reads KVKVMLRIWP…VQLAARIHRL (355 aa). 462 to 469 is a binding site for ATP; that stretch reads GHMSLGKS. Disordered regions lie at residues 718–778, 794–827, 846–982, 1078–1104, 1118–1266, 1328–1425, 1442–1633, and 1652–1698; these read LRRK…SSEQ, SDRE…RDAD, GSEA…QAAL, YTSQ…GSPA, LSES…PRLP, SGSL…PYRP, SKVR…SGEL, and YESM…TGLQ. Residues 742–751 are compositionally biased toward basic residues; the sequence is RRPPHLRPFH. Over residues 818 to 827 the composition is skewed to basic and acidic residues; it reads RPSEGPRDAD. Positions 905 to 915 are enriched in polar residues; that stretch reads SDPSKTGTQSE. Pro residues predominate over residues 940-950; the sequence is LPSPAPPPPRQ. Residues 1084–1095 show a composition bias toward low complexity; sequence EGPGDPGEFPEG. The span at 1151–1162 shows a compositional bias: basic and acidic residues; that stretch reads EESKVRSSECGR. The residue at position 1257 (Ser-1257) is a Phosphoserine. Positions 1328–1353 are enriched in low complexity; that stretch reads SGSLKTTSGSKKSVSPKGAFFPRPSG. The segment covering 1366 to 1378 has biased composition (polar residues); it reads LEQSTALTPTQAL. The span at 1390 to 1399 shows a compositional bias: basic and acidic residues; sequence RGEEEARPSG. A compositionally biased stretch (polar residues) spans 1400–1412; it reads RSDSSVPKATSSL. Composition is skewed to low complexity over residues 1477–1489, 1524–1537, and 1575–1587; these read PAKG…PPAG, PGPR…PGIG, and WGST…NDSG. Positions 1616–1629 are enriched in polar residues; sequence RYSSGHGSDNSSVL. Ser-1654 bears the Phosphoserine mark. The span at 1664–1675 shows a compositional bias: low complexity; that stretch reads SASSAPDSMSES. A compositionally biased stretch (basic residues) spans 1685 to 1698; the sequence is RSLKSPKKRATGLQ. The stretch at 1780–1812 forms a coiled coil; sequence LRLAERRQQRLQEVQAKRDHLCEELAETQGRLM.

This sequence belongs to the TRAFAC class myosin-kinesin ATPase superfamily. Kinesin family. KIF26 subfamily. In terms of assembly, interacts with GRB2 (via SH2 domain). Expressed in several neuronal populations.

It is found in the cytoplasm. The protein resides in the cytoskeleton. Its function is as follows. Atypical kinesin that plays a key role in enteric neuron development. Acts by repressing a cell growth signaling pathway in the enteric nervous system development, possibly via its interaction with GRB2 that prevents GRB2-binding to SHC, thereby attenating the GDNF-Ret signaling. Binds to microtubules but lacks microtubule-based motility due to the absence of ATPase activity. Plays a critical role in cerebral cortical development. It probably acts as a microtubule stabilizer that regulates neurite growth and radial migration of cortical excitatory neurons. The chain is Kinesin-like protein KIF26A (Kif26a) from Mus musculus (Mouse).